Consider the following 143-residue polypeptide: Small ribosomal subunit protein uS11c (143 aa).

It belongs to the universal ribosomal protein uS11 family. In terms of assembly, part of the 30S ribosomal subunit.

The protein localises to the plastid. Its subcellular location is the chloroplast. The chain is Small ribosomal subunit protein uS11c from Saccharum officinarum (Sugarcane).